Reading from the N-terminus, the 400-residue chain is MTVVDIKIGNKYRIGRKIGSGSFGQIYLGLNTVNGEQVAVKLEPLKARHHQLEYEFRVYNILKGNIGIPTIRWFGVTNSYNAMVMDLLGPSLEDLFCYCGRKFTLKTVLLLADQLISRIEYVHSKSFLHRDIKPDNFLMKKHSNVVTMIDFGLAKKYRDFKTHVHIPYRDNKNLTGTARYASINTHIGIEQSRRDDLESLGYVLLYFCRGSLPWQGLQADTKEQKYQRIRDTKIGTPLEVLCKGLPEEFITYMCYTRQLSFTEKPNYAYLRKLFRDLLIRKGYQYDYVFDWMILKYQKRAAAAAAASATAPPQVTSPMVSQTQPVNPITPNYSSIPLPAERNPKTPQSFSTNIVQCASPSPLPLSFRSPVPNKDYEYIPSSLQPQYSAQLRRVLDEEPAP.

The Protein kinase domain occupies 12 to 278 (YRIGRKIGSG…YLRKLFRDLL (267 aa)). Residues 18 to 26 (IGSGSFGQI) and K41 contribute to the ATP site. D131 serves as the catalytic Proton acceptor. The interval 330–352 (PNYSSIPLPAERNPKTPQSFSTN) is disordered.

This sequence belongs to the protein kinase superfamily. CK1 Ser/Thr protein kinase family. Casein kinase I subfamily.

The protein localises to the nucleus. The enzyme catalyses L-seryl-[protein] + ATP = O-phospho-L-seryl-[protein] + ADP + H(+). It carries out the reaction L-threonyl-[protein] + ATP = O-phospho-L-threonyl-[protein] + ADP + H(+). Functionally, involved in DNA repair. May regulate the activity of protein(s) involved in double strand break repair caused by gamma rays. In Schizosaccharomyces pombe (strain 972 / ATCC 24843) (Fission yeast), this protein is Casein kinase I homolog hhp2 (hhp2).